The following is a 238-amino-acid chain: MTHVEVVATIAPQLYIEETLIQKINHRIDAIDVLELRIDQIENVTVNQVAEMITKLKVMQDSFKLLVTYRTKLQGGYGQFTNDLYLNLISDLANINGIDMIDIEWQADIDIEKHQRIITHLQQYNKEVVISHHNFESTPPLDELQFIFFKMQKFNPEYVKLAVMPHNKNDVLNLLQAMSTFSDTMDCKVVGISMSKLGLISRTAQGVFGGALTYGCIGEPQAPGQIDVTDLKAQVTLY.

3-dehydroquinate contacts are provided by residues 35-37 (ELR) and R70. H133 (proton donor/acceptor) is an active-site residue. K160 functions as the Schiff-base intermediate with substrate in the catalytic mechanism. 2 residues coordinate 3-dehydroquinate: R202 and Q225.

Belongs to the type-I 3-dehydroquinase family. In terms of assembly, homodimer.

The catalysed reaction is 3-dehydroquinate = 3-dehydroshikimate + H2O. It participates in metabolic intermediate biosynthesis; chorismate biosynthesis; chorismate from D-erythrose 4-phosphate and phosphoenolpyruvate: step 3/7. Functionally, involved in the third step of the chorismate pathway, which leads to the biosynthesis of aromatic amino acids. Catalyzes the cis-dehydration of 3-dehydroquinate (DHQ) and introduces the first double bond of the aromatic ring to yield 3-dehydroshikimate. In Staphylococcus aureus (strain bovine RF122 / ET3-1), this protein is 3-dehydroquinate dehydratase.